The primary structure comprises 543 residues: CTP synthase (543 aa).

The interval 1-265 (MARFIFITGG…DSEVLRAFGI (265 aa)) is amidoligase domain. Ser-13 is a binding site for CTP. Residue Ser-13 participates in UTP binding. An ATP-binding site is contributed by 14–19 (SLGKGL). Tyr-54 serves as a coordination point for L-glutamine. Residue Asp-71 participates in ATP binding. Residues Asp-71 and Glu-139 each contribute to the Mg(2+) site. CTP is bound by residues 146–148 (DIE), 186–191 (KTKPTQ), and Lys-222. Residues 186 to 191 (KTKPTQ) and Lys-222 each bind UTP. The Glutamine amidotransferase type-1 domain occupies 291-542 (TIGVVGKYVS…IEAAVKQSRL (252 aa)). Residue Gly-354 participates in L-glutamine binding. Cys-381 acts as the Nucleophile; for glutamine hydrolysis in catalysis. L-glutamine-binding positions include 382-385 (LGMQ), Glu-405, and Arg-470. Residues His-515 and Glu-517 contribute to the active site.

This sequence belongs to the CTP synthase family. As to quaternary structure, homotetramer.

It carries out the reaction UTP + L-glutamine + ATP + H2O = CTP + L-glutamate + ADP + phosphate + 2 H(+). The enzyme catalyses L-glutamine + H2O = L-glutamate + NH4(+). The catalysed reaction is UTP + NH4(+) + ATP = CTP + ADP + phosphate + 2 H(+). Its pathway is pyrimidine metabolism; CTP biosynthesis via de novo pathway; CTP from UDP: step 2/2. With respect to regulation, allosterically activated by GTP, when glutamine is the substrate; GTP has no effect on the reaction when ammonia is the substrate. The allosteric effector GTP functions by stabilizing the protein conformation that binds the tetrahedral intermediate(s) formed during glutamine hydrolysis. Inhibited by the product CTP, via allosteric rather than competitive inhibition. Functionally, catalyzes the ATP-dependent amination of UTP to CTP with either L-glutamine or ammonia as the source of nitrogen. Regulates intracellular CTP levels through interactions with the four ribonucleotide triphosphates. This chain is CTP synthase, found in Sphingopyxis alaskensis (strain DSM 13593 / LMG 18877 / RB2256) (Sphingomonas alaskensis).